We begin with the raw amino-acid sequence, 368 residues long: Protein trichome birefringence-like 43 (368 aa).

Residues 9-25 (GVVSVMVLMILVLLKQI) traverse the membrane as a helical; Signal-anchor for type II membrane protein segment. Positions 117–119 (GDS) match the GDS motif motif. The short motif at 344–358 (DCSHWCLSGVPDSWN) is the DCXHWCLPGXXDXWN motif element.

This sequence belongs to the PC-esterase family. TBL subfamily.

Its subcellular location is the membrane. Functionally, may act as a bridging protein that binds pectin and other cell wall polysaccharides. Probably involved in maintaining esterification of pectins. May be involved in the specific O-acetylation of cell wall polymers. The protein is Protein trichome birefringence-like 43 (TBL43) of Arabidopsis thaliana (Mouse-ear cress).